A 353-amino-acid polypeptide reads, in one-letter code: Peroxisome assembly protein 12-B (353 aa).

Residues 1 to 19 (MAERGAHITTTSPLDDRPS) lie on the Peroxisomal matrix side of the membrane. A helical transmembrane segment spans residues 20 to 47 (IFEVVAQESLMAAARPALHHIVKVLAES). Residues 48-51 (NPAR) lie on the Cytoplasmic side of the membrane. The chain crosses the membrane as a helical span at residues 52 to 76 (YGTLWRWFDELYTLLECLLQQHYLS). At 77–104 (WASASFSENFYGLKRVTLGKQVGQRNLA) the chain is on the peroxisomal matrix side. Residues 105–134 (RKEYWKSLLLLVLIPYLRIKLEKLVNSLRE) traverse the membrane as a helical segment. Residues 135 to 139 (EEDYS) are Cytoplasmic-facing. Residues 140–178 (IQNPTSFHKRCYKAILASYPFLKLGWEAWFLFYQLRYIL) form a helical membrane-spanning segment. Topologically, residues 179–243 (WNGKHHSPLL…LGAVTLSVSS (65 aa)) are peroxisomal matrix. The helical transmembrane segment at 244-271 (SLSLGVFFLQFLDWWYSAENRETLKSLG) threads the bilayer. The Cytoplasmic segment spans residues 272–353 (NLPVPPPPIH…HLIKLYTPDG (82 aa)). Positions 298, 301, 319, and 322 each coordinate Zn(2+). The RING-type; degenerate zinc-finger motif lies at 298-337 (CPLCRKVRVNDTALGTSGYVFCYRCAYYYVKTHQRCPVSG).

The protein belongs to the pex2/pex10/pex12 family. As to quaternary structure, component of the PEX2-PEX10-PEX12 retrotranslocation channel.

The protein localises to the peroxisome membrane. It functions in the pathway protein modification; protein ubiquitination. Its function is as follows. Component of a retrotranslocation channel required for peroxisome organization by mediating export of the PEX5 receptor from peroxisomes to the cytosol, thereby promoting PEX5 recycling. The retrotranslocation channel is composed of PEX2, PEX10 and PEX12; each subunit contributing transmembrane segments that coassemble into an open channel that specifically allows the passage of PEX5 through the peroxisomal membrane. PEX12 also regulates PEX5 recycling by activating the E3 ubiquitin-protein ligase activity of PEX10. When PEX5 recycling is compromised, PEX12 stimulates PEX10-mediated polyubiquitination of PEX5, leading to its subsequent degradation. The protein is Peroxisome assembly protein 12-B of Xenopus laevis (African clawed frog).